The sequence spans 616 residues: Chaperone protein HscA (616 aa).

The protein belongs to the heat shock protein 70 family.

Functionally, chaperone involved in the maturation of iron-sulfur cluster-containing proteins. Has a low intrinsic ATPase activity which is markedly stimulated by HscB. Involved in the maturation of IscU. This Photorhabdus laumondii subsp. laumondii (strain DSM 15139 / CIP 105565 / TT01) (Photorhabdus luminescens subsp. laumondii) protein is Chaperone protein HscA.